We begin with the raw amino-acid sequence, 394 residues long: Beta-ketothiolase BktB (394 aa).

Cys90 serves as the catalytic Acyl-thioester intermediate. Active-site proton acceptor residues include His350 and Cys380.

It belongs to the thiolase-like superfamily. Thiolase family.

The enzyme catalyses an acyl-CoA + acetyl-CoA = a 3-oxoacyl-CoA + CoA. It carries out the reaction 2 acetyl-CoA = acetoacetyl-CoA + CoA. Its function is as follows. Required for efficient production of poly(beta-hydroxybutyrate-co-beta-hydroxyvalerate) (PHBV). Catalyzes the condensation of acetyl-CoA and propionyl-CoA to form beta-ketovaleryl-CoA, and the condensation of two acetyl-CoA molecules to form acetoacetyl-CoA. The sequence is that of Beta-ketothiolase BktB (bktB) from Cupriavidus necator (strain ATCC 17699 / DSM 428 / KCTC 22496 / NCIMB 10442 / H16 / Stanier 337) (Ralstonia eutropha).